The following is a 155-amino-acid chain: F-box only protein 48 (155 aa).

Residues methionine 1–lysine 27 form a disordered region. Residues arginine 7–asparagine 19 are compositionally biased toward polar residues. In terms of domain architecture, F-box spans asparagine 32–histidine 79.

This Homo sapiens (Human) protein is F-box only protein 48 (FBXO48).